The primary structure comprises 147 residues: Ribonuclease 4 (147 aa).

A signal peptide spans 1–28 (MALQRTHSLLLLLLLTLLGLGLVQPSYG). Q29 carries the pyrrolidone carboxylic acid modification. DUMP contacts are provided by R35, H40, K68, N71, and T72. Catalysis depends on H40, which acts as the Proton acceptor. 4 disulfides stabilise this stretch: C53-C109, C67-C120, C85-C135, and C92-C99. Residue H144 is the Proton donor of the active site. F145 contacts dUMP.

The protein belongs to the pancreatic ribonuclease family.

The protein localises to the secreted. Cleaves preferentially after uridine bases. Has antimicrobial activity against uropathogenic E.coli (UPEC). Probably contributes to urinary tract sterility. This chain is Ribonuclease 4 (RNASE4), found in Pongo abelii (Sumatran orangutan).